The following is a 363-amino-acid chain: MVSYLFVLGALASVAIASPVPELKARASCTFTDAASAIKGKASCTTIVLNNIAVPAGTTLDMTGLKSGTHVSFSGKTTFGYKEWEGPLISFSGSNVVIDGASGHSIDCQGSRWWDSKGGNGGKTKPKFFYAHSLKDSTIRGLHTLNTPVQAFSINGAANLGVYDVSVDNSAGDSAGGHNTDAFDVGSSTGVYISGADVKNQDDCLAVNSGTNITFTGGTCSGGHGLSIGSVGGRKDNVVKSVSITNSKIINSDNGVRIKTVAGATGPVSDITYSGITLSNIAKYGIVIEQDYENGSPTGKPTSGVPISGLTLSKISGSVSSSATPVYILCASCTNWKWSGVSVTGGKKSSKCTGIPSGSGAAC.

Positions 1-17 (MVSYLFVLGALASVAIA) are cleaved as a signal peptide. Residues 18–26 (SPVPELKAR) constitute a propeptide that is removed on maturation. Cysteine 29 and cysteine 44 are oxidised to a cystine. PbH1 repeat units follow at residues 188 to 209 (STGV…AVNS), 210 to 230 (GTNI…SIGS), 239 to 260 (VKSV…RIKT), and 268 to 290 (VSDI…VIEQ). Residue aspartate 202 is the Proton donor of the active site. Residues cysteine 204 and cysteine 220 are joined by a disulfide bond. The N-linked (GlcNAc...) asparagine glycan is linked to asparagine 212. Histidine 224 is a catalytic residue. 2 cysteine pairs are disulfide-bonded: cysteine 330–cysteine 333 and cysteine 352–cysteine 363.

The protein belongs to the glycosyl hydrolase 28 family.

The protein localises to the secreted. The catalysed reaction is (1,4-alpha-D-galacturonosyl)n+m + H2O = (1,4-alpha-D-galacturonosyl)n + (1,4-alpha-D-galacturonosyl)m.. Its function is as follows. Involved in maceration and soft-rotting of plant tissue. Hydrolyzes the 1,4-alpha glycosidic bonds of de-esterified pectate in the smooth region of the plant cell wall. This chain is Endopolygalacturonase 1 (PG1), found in Colletotrichum lindemuthianum (Bean anthracnose fungus).